Consider the following 86-residue polypeptide: Envelope glycoprotein N (86 aa).

An N-terminal signal peptide occupies residues 1 to 29 (MTLYKIVSKPIILLAFFFTRVVFTNEVDG). The Virion surface portion of the chain corresponds to 30–47 (EELFYKPTCHSDTYEIIL). The chain crosses the membrane as a helical span at residues 48-68 (KKFSSIWILVNTFILLCSFSL). Residues 69-86 (FLKYWCFKTLAKETVKGY) are Intravirion-facing.

The protein belongs to the herpesviridae glycoprotein N family. As to quaternary structure, interacts (via N-terminus) with gM (via N-terminus). The gM-gN heterodimer forms the gCII complex.

The protein localises to the virion membrane. The protein resides in the host membrane. It localises to the host Golgi apparatus. It is found in the host trans-Golgi network. Its function is as follows. Envelope glycoprotein necessary for proper maturation of gM and modulation of its membrane fusion activity. Also plays a critical role in virion morphogenesis. This Homo sapiens (Human) protein is Envelope glycoprotein N.